A 225-amino-acid polypeptide reads, in one-letter code: ATP-dependent Clp protease proteolytic subunit (225 aa).

Residue Ser123 is the Nucleophile of the active site. His148 is an active-site residue.

This sequence belongs to the peptidase S14 family. As to quaternary structure, fourteen ClpP subunits assemble into 2 heptameric rings which stack back to back to give a disk-like structure with a central cavity, resembling the structure of eukaryotic proteasomes.

It is found in the cytoplasm. The catalysed reaction is Hydrolysis of proteins to small peptides in the presence of ATP and magnesium. alpha-casein is the usual test substrate. In the absence of ATP, only oligopeptides shorter than five residues are hydrolyzed (such as succinyl-Leu-Tyr-|-NHMec, and Leu-Tyr-Leu-|-Tyr-Trp, in which cleavage of the -Tyr-|-Leu- and -Tyr-|-Trp bonds also occurs).. Cleaves peptides in various proteins in a process that requires ATP hydrolysis. Has a chymotrypsin-like activity. Plays a major role in the degradation of misfolded proteins. The protein is ATP-dependent Clp protease proteolytic subunit of Chlorobaculum tepidum (strain ATCC 49652 / DSM 12025 / NBRC 103806 / TLS) (Chlorobium tepidum).